We begin with the raw amino-acid sequence, 199 residues long: Peptidyl-tRNA hydrolase (199 aa).

Tyrosine 15 contributes to the tRNA binding site. The active-site Proton acceptor is histidine 20. Positions 66, 68, and 114 each coordinate tRNA.

Belongs to the PTH family. Monomer.

The protein localises to the cytoplasm. The catalysed reaction is an N-acyl-L-alpha-aminoacyl-tRNA + H2O = an N-acyl-L-amino acid + a tRNA + H(+). In terms of biological role, hydrolyzes ribosome-free peptidyl-tRNAs (with 1 or more amino acids incorporated), which drop off the ribosome during protein synthesis, or as a result of ribosome stalling. Its function is as follows. Catalyzes the release of premature peptidyl moieties from peptidyl-tRNA molecules trapped in stalled 50S ribosomal subunits, and thus maintains levels of free tRNAs and 50S ribosomes. The chain is Peptidyl-tRNA hydrolase from Burkholderia cenocepacia (strain HI2424).